Consider the following 256-residue polypeptide: Small ribosomal subunit protein eS1 (256 aa).

A compositionally biased stretch (basic residues) spans 1-18; sequence MAVGKNKRLSKGKKGVKK. A disordered region spans residues 1–21; sequence MAVGKNKRLSKGKKGVKKRTV. Alanine 2 carries the post-translational modification N-acetylalanine; partial.

This sequence belongs to the eukaryotic ribosomal protein eS1 family. In terms of assembly, component of the small ribosomal subunit. Mature ribosomes consist of a small (40S) and a large (60S) subunit. The 40S subunit contains about 33 different proteins and 1 molecule of RNA (18S). The 60S subunit contains about 49 different proteins and 3 molecules of RNA (25S, 5.8S and 5S).

It is found in the cytoplasm. The protein is Small ribosomal subunit protein eS1 (rps1) of Aspergillus niger (strain ATCC MYA-4892 / CBS 513.88 / FGSC A1513).